Consider the following 77-residue polypeptide: Envelope protein US9 homolog (77 aa).

Residues 12–13 (LL) carry the Di-leucine internalization motif motif.

It belongs to the alphaherpesvirinae envelope protein US9 family.

This is Envelope protein US9 homolog from Chlorocebus aethiops (Green monkey).